Here is a 232-residue protein sequence, read N- to C-terminus: MSNYKEIAWQGLWKNNPGLVQLLGLCPLLAVTATLTNALGLGLATVAVLIGSNVLVSLVREFVPKEIRIPVFVMIIAALVTVVQLVINAYAYGLYLSLGIFLPLIVTNCVIIGRAEAFASRNSVGAAAFDGLMMGTGFTAVLAVLGAVREILGQGTLFDGADQLLGDWAASLRIELWHVDNSFLLAMLPPGAFIAMGLLIAGKNVIDKRLEAKKPTPEAAPAITRARITKVG.

Helical transmembrane passes span 18 to 38 (GLVQ…LTNA), 39 to 59 (LGLG…VSLV), 69 to 89 (IPVF…VINA), 93 to 113 (GLYL…VIIG), 128 to 148 (AFDG…LGAV), and 182 to 202 (SFLL…LIAG).

The protein belongs to the NqrDE/RnfAE family. As to quaternary structure, the complex is composed of six subunits: RnfA, RnfB, RnfC, RnfD, RnfE and RnfG.

Its subcellular location is the cell inner membrane. In terms of biological role, part of a membrane-bound complex that couples electron transfer with translocation of ions across the membrane. The protein is Ion-translocating oxidoreductase complex subunit E of Shewanella amazonensis (strain ATCC BAA-1098 / SB2B).